The sequence spans 480 residues: Probable glycine dehydrogenase (decarboxylating) subunit 2 (480 aa).

An N6-(pyridoxal phosphate)lysine modification is found at lysine 265.

It belongs to the GcvP family. C-terminal subunit subfamily. As to quaternary structure, the glycine cleavage system is composed of four proteins: P, T, L and H. In this organism, the P 'protein' is a heterodimer of two subunits. Pyridoxal 5'-phosphate serves as cofactor.

It carries out the reaction N(6)-[(R)-lipoyl]-L-lysyl-[glycine-cleavage complex H protein] + glycine + H(+) = N(6)-[(R)-S(8)-aminomethyldihydrolipoyl]-L-lysyl-[glycine-cleavage complex H protein] + CO2. In terms of biological role, the glycine cleavage system catalyzes the degradation of glycine. The P protein binds the alpha-amino group of glycine through its pyridoxal phosphate cofactor; CO(2) is released and the remaining methylamine moiety is then transferred to the lipoamide cofactor of the H protein. The protein is Probable glycine dehydrogenase (decarboxylating) subunit 2 of Thermosipho africanus (strain TCF52B).